Here is a 49-residue protein sequence, read N- to C-terminus: MAVPKRRVSHSRSAKRRTHYKITLAKPVKDKDGTYKLPHHINPTTGEYK.

Residues 25-49 (AKPVKDKDGTYKLPHHINPTTGEYK) are disordered.

This sequence belongs to the bacterial ribosomal protein bL32 family.

The chain is Large ribosomal subunit protein bL32 from Sulfurimonas denitrificans (strain ATCC 33889 / DSM 1251) (Thiomicrospira denitrificans (strain ATCC 33889 / DSM 1251)).